Reading from the N-terminus, the 218-residue chain is Large ribosomal subunit protein uL3 (218 aa).

The segment at 133 to 158 is disordered; the sequence is RGQGASHGAQAVHRRPGSIGGCATPG.

Belongs to the universal ribosomal protein uL3 family. As to quaternary structure, part of the 50S ribosomal subunit. Forms a cluster with proteins L14 and L19.

In terms of biological role, one of the primary rRNA binding proteins, it binds directly near the 3'-end of the 23S rRNA, where it nucleates assembly of the 50S subunit. This Mycolicibacterium vanbaalenii (strain DSM 7251 / JCM 13017 / BCRC 16820 / KCTC 9966 / NRRL B-24157 / PYR-1) (Mycobacterium vanbaalenii) protein is Large ribosomal subunit protein uL3.